A 266-amino-acid polypeptide reads, in one-letter code: Norfluorocurarine synthase 1 (266 aa).

An AB hydrolase-1 domain is found at 11-121 (HFVLVHGAGH…VMPDAVNPPS (111 aa)). Residues Ser-86, Asp-216, and His-244 contribute to the active site.

The protein belongs to the AB hydrolase superfamily. As to quaternary structure, homodimer.

It carries out the reaction 17-dehydropreakuammicine + H2O = norfluorocurarine + methanol + CO2. The protein operates within alkaloid biosynthesis. Its function is as follows. Hydrolase involved in the biosynthesis of curare monoterpene indole alkaloids (MIAs), natural products such as diaboline, a pharmacologically active compound used to regulate blood pressure. Curare alkaloids act as animal glycine receptor antagonists. Catalyzes the conversion of dehydropreakuammicine to norfluorocurarine. This is Norfluorocurarine synthase 1 from Strychnos sp.